A 252-amino-acid chain; its full sequence is MDKLQNIRGVAFDLDGTLVDSAPGLAAAVDMALYALELPVAGEERVITWIGNGADVLMERALTWAREERATLRKTMGKPPVDEDIPAEEQVRILRKLFDRYYGEVAEEGTFLFPHVADTLGALNASGLSLGLVTNKPTPFVAPLLESLDIAKYFSVVIGGDDVQNKKPHPEPLLLVASRLGMMPEQMLFVGDSRNDIQAAKAAGCPSVGLTYGYNYGEAIALSEPDVIYDSFNDLLPALGLPHSDNQEIKND.

The active-site Nucleophile is D13. Residues D13, D15, and D192 each contribute to the Mg(2+) site.

The protein belongs to the HAD-like hydrolase superfamily. CbbY/CbbZ/Gph/YieH family. As to quaternary structure, monomer. It depends on Mg(2+) as a cofactor. Chloride serves as cofactor.

The catalysed reaction is 2-phosphoglycolate + H2O = glycolate + phosphate. It functions in the pathway organic acid metabolism; glycolate biosynthesis; glycolate from 2-phosphoglycolate: step 1/1. Functionally, specifically catalyzes the dephosphorylation of 2-phosphoglycolate. Is involved in the dissimilation of the intracellular 2-phosphoglycolate formed during the DNA repair of 3'-phosphoglycolate ends, a major class of DNA lesions induced by oxidative stress. In Salmonella choleraesuis (strain SC-B67), this protein is Phosphoglycolate phosphatase.